The sequence spans 280 residues: Thylakoid lumenal protein TL20.3, chloroplastic (280 aa).

The N-terminal 59 residues, 1-59 (MAFSSLSPLPMKSLDISRSSSSVSRSPYHFQRYLLRRLQLSSRSNLEIKDSSNTREGCC), are a transit peptide targeting the chloroplast. Residues 60-90 (SSAESNTWKRILSAAMAAAVIASSSGVPAMA) constitute a thylakoid transit peptide. Pentapeptide repeat domains follow at residues 124–163 (ENFRRANFTSADMRESDFSGSTFNGAYLEKAVAYKANFSG) and 169–208 (TLMDRMVLNEANLTNAVLVRSVLTRSDLGGAKIEGADFSD).

As to quaternary structure, interacts with thioredoxin. Interacts in vitro with LTO1.

Its subcellular location is the plastid. The protein resides in the chloroplast thylakoid lumen. Pentapeptide repeat protein of unknown function. Subject to degradation when reduced. The polypeptide is Thylakoid lumenal protein TL20.3, chloroplastic (Arabidopsis thaliana (Mouse-ear cress)).